Reading from the N-terminus, the 161-residue chain is Cyclic pyranopterin monophosphate synthase (161 aa).

Residues 73 to 75 (LCH) and 110 to 111 (ME) each bind substrate. The active site involves Asp125.

The protein belongs to the MoaC family. Homohexamer; trimer of dimers.

The enzyme catalyses (8S)-3',8-cyclo-7,8-dihydroguanosine 5'-triphosphate = cyclic pyranopterin phosphate + diphosphate. The protein operates within cofactor biosynthesis; molybdopterin biosynthesis. Functionally, catalyzes the conversion of (8S)-3',8-cyclo-7,8-dihydroguanosine 5'-triphosphate to cyclic pyranopterin monophosphate (cPMP). The polypeptide is Cyclic pyranopterin monophosphate synthase (Pseudomonas savastanoi pv. phaseolicola (strain 1448A / Race 6) (Pseudomonas syringae pv. phaseolicola (strain 1448A / Race 6))).